We begin with the raw amino-acid sequence, 258 residues long: GPI alpha-1,4-mannosyltransferase I, stabilizing subunit (258 aa).

Positions 1–21 are cleaved as a signal peptide; sequence MAARVAAVRAAAWLLLGAATG. Residues 22–230 are Lumenal-facing; the sequence is LTRGPAAAFT…PVGLTVHTSL (209 aa). N103 is a glycosylation site (N-linked (GlcNAc...) asparagine). A helical membrane pass occupies residues 231–251; the sequence is VCSVTLLITILCSTLILVAVF. The Cytoplasmic segment spans residues 252–258; sequence KYGHFSL.

It belongs to the PIGX family. Part of the glycosylphosphatidylinositol-mannosyltransferase I complex that is composed of PIGM and PIGX. Interacts with PIGM; PIGX stabilizes PIGM.

It is found in the endoplasmic reticulum membrane. It participates in glycolipid biosynthesis; glycosylphosphatidylinositol-anchor biosynthesis. Functionally, stabilizing subunit of the glycosylphosphatidylinositol-mannosyltransferase I complex which catalyzes the transfer of the first mannose, via an alpha-1,4 bond from a dolichol-phosphate-mannose (Dol-P-Man) to the glucosaminyl acyl phosphatidylinositol (GlcN-(acyl)PI) intermediate to generate alpha-D-Man-(1-&gt;4)-alpha-D-GlcN-(1-&gt;6)-(1-radyl,2-acyl-sn-glycero-3-phospho)-2-acyl-inositol and participates in the sixth step of the glycosylphosphatidylinositol-anchor biosynthesis. Probably acts by stabilizing the mannosyltransferase PIGM. This is GPI alpha-1,4-mannosyltransferase I, stabilizing subunit from Homo sapiens (Human).